We begin with the raw amino-acid sequence, 605 residues long: 9-cis-epoxycarotenoid dioxygenase NCED1, chloroplastic (605 aa).

Residues 1–16 constitute a chloroplast transit peptide; it reads MATTTSHATNTWIKTK. Residues 55–89 are disordered; sequence ILHFPKQSSNYQTPKNNTISHPKQENNNSSSSSTS. The segment covering 60–75 has biased composition (polar residues); it reads KQSSNYQTPKNNTISH. Residues 80-89 are compositionally biased toward low complexity; it reads NNNSSSSSTS. Histidine 302, histidine 351, histidine 416, and histidine 592 together coordinate Fe cation.

This sequence belongs to the carotenoid oxygenase family. The cofactor is Fe(2+). Expressed in developing and ripening fruits. Highly expressed in pulp. Observed in unpollinated ovaries (e.g. ovules, placenta and pericarp). Expressed in flowers.

It localises to the plastid. The protein resides in the chloroplast stroma. It carries out the reaction a 9-cis-epoxycarotenoid + O2 = a 12'-apo-carotenal + 2-cis,4-trans-xanthoxin. The enzyme catalyses 9-cis-violaxanthin + O2 = (3S,5R,6S)-5,6-epoxy-3-hydroxy-5,6-dihydro-12'-apo-beta-caroten-12'-al + 2-cis,4-trans-xanthoxin. It catalyses the reaction 9'-cis-neoxanthin + O2 = (3S,5R,6R)-3,5-dihydroxy-6,7-didehydro-5,6-dihydro-12'-apo-beta-caroten-12'-al + 2-cis,4-trans-xanthoxin. It functions in the pathway plant hormone biosynthesis; abscisate biosynthesis. Has a 11,12(11',12') 9-cis epoxycarotenoid cleavage activity. Catalyzes the first step of abscisic-acid (ABA) biosynthesis from carotenoids. Required for ABA accumulation upon drought. Required for ABA-mediated regulation of anther/pollen development, including metabolism, cell wall modification and transcription level. Positive regulator of fruit ripening involved in the biosynthesis of abscisic acid (ABA); initiates ABA biosynthesis at the onset of fruit ripening. Modulates the degree of pigmentation and carotenoid composition as well as pectin catabolism during ripening and may regulate the ethylene production and action in climacteric tomato fruit. In Solanum lycopersicum (Tomato), this protein is 9-cis-epoxycarotenoid dioxygenase NCED1, chloroplastic.